Consider the following 2104-residue polypeptide: Transmembrane matrix receptor MUP-4 (2104 aa).

The signal sequence occupies residues 1-15 (MRWVPLVLLPLIASA). Topologically, residues 16 to 1860 (ATTYQHRQTY…FCETAPSNLP (1845 aa)) are extracellular. EGF-like domains follow at residues 71–110 (VVNECARPSLNACHKDAQCVDLAEGYTCRCNSGFADTSPD), 122–163 (TTNE…VSTS), and 175–213 (SVNECTNGEADCSNNADCFDRADGYECKCRPGFVDASPN). 6 disulfides stabilise this stretch: cysteine 75–cysteine 89, cysteine 83–cysteine 98, cysteine 126–cysteine 142, cysteine 136–cysteine 151, cysteine 179–cysteine 192, and cysteine 186–cysteine 201. One can recognise a WR1 domain in the interval 220-265 (RVCNKPKAPEYYGQQSRQPQCSEGSGCGPNEECRFNTAGEKVCQCR). EGF-like domains lie at 278-315 (VFSQCEQANECDRNAFCSNTYDGPKCQCKDGFLDVSPD), 327-360 (VRNECADGSHDCSHQAACQDTPTGYICSCNSNCI), and 377-416 (AANQCSDKSLNSCDENADCVQLPDGYTCKCFAGYVDVSSN). 7 disulfide bridges follow: cysteine 282/cysteine 294, cysteine 288/cysteine 303, cysteine 331/cysteine 344, cysteine 338/cysteine 353, cysteine 355/cysteine 359, cysteine 381/cysteine 395, and cysteine 389/cysteine 404. The VWFA domain occupies 437 to 612 (DLVFLIDGSG…DLNTRLRSAI (176 aa)). Asparagine 494 and asparagine 556 each carry an N-linked (GlcNAc...) asparagine glycan. EGF-like domains lie at 728 to 772 (SNDE…NKCE) and 819 to 857 (LIDECAAGVADCDPNAKCTDTDESYICTCNEGFLDKSPE). 21 cysteine pairs are disulfide-bonded: cysteine 732–cysteine 746, cysteine 740–cysteine 756, cysteine 758–cysteine 771, cysteine 823–cysteine 836, cysteine 830–cysteine 845, cysteine 873–cysteine 886, cysteine 880–cysteine 895, cysteine 923–cysteine 937, cysteine 931–cysteine 946, cysteine 972–cysteine 985, cysteine 979–cysteine 995, cysteine 1020–cysteine 1034, cysteine 1028–cysteine 1046, cysteine 1075–cysteine 1089, cysteine 1083–cysteine 1098, cysteine 1125–cysteine 1139, cysteine 1133–cysteine 1148, cysteine 1173–cysteine 1187, cysteine 1181–cysteine 1196, cysteine 1219–cysteine 1233, and cysteine 1227–cysteine 1242. The 39-residue stretch at 869 to 907 (QRNECLDGTHNCSMNADCIDLPDGFLCRCKEDFVDISPN) folds into the EGF-like 9; calcium-binding domain. Asparagine 879 carries N-linked (GlcNAc...) asparagine glycosylation. 7 EGF-like domains span residues 919–958 (LVNECLITGGHNCHEHAICIDTRDSYKCQCKEGYVDHDEL), 968–1007 (LNQICESGKHECDKNARCVEKGANDYECVCNAGFIDKSPL), 1016–1058 (VEPI…VGAV), 1071–1110 (LVNECLSASLNSCDAAATCIDLDDGYTCKCPLGSKDESPV), 1121–1160 (LVNECNIPHLNNCSHFATCIDLEEGYECKCKPEYHDQKPE), 1169–1208 (IINECLAENLNDCSPNAMCIDKIDGYDCKCKAPFQDEMPS), and 1215–1254 (RFDECADPKDNDCDKHALCIDTDDSYTCQCKEGFFDEISD). A glycan (N-linked (GlcNAc...) asparagine) is linked at asparagine 1037. Residue asparagine 1132 is glycosylated (N-linked (GlcNAc...) asparagine). Asparagine 1271, asparagine 1403, and asparagine 1576 each carry an N-linked (GlcNAc...) asparagine glycan. SEA domains are found at residues 1322–1444 (PTTS…DDAD) and 1495–1620 (AVES…PEQL). EGF-like domains follow at residues 1622-1658 (PFSNCYHSDCHPDAICKEVGKGYTCTCPDGFRDLNPS), 1669-1705 (GVNECEKPELNECSPHARCIDLDYLYKCECIRPYVNS), and 1717-1754 (SIDYCQDVNYCPLNSTCVNVDEQARCDCKPGFVDLRKS). Intrachain disulfides connect cysteine 1626–cysteine 1637, cysteine 1631–cysteine 1646, cysteine 1673–cysteine 1687, cysteine 1681–cysteine 1696, cysteine 1721–cysteine 1733, cysteine 1727–cysteine 1742, cysteine 1776–cysteine 1789, cysteine 1783–cysteine 1798, cysteine 1821–cysteine 1830, cysteine 1824–cysteine 1841, and cysteine 1843–cysteine 1852. N-linked (GlcNAc...) asparagine glycosylation is found at asparagine 1730 and asparagine 1782. Residues 1772-1810 (DIDECALGLHNCSAAAICIDKKIGYECQCQEGYEDGNPS) form the EGF-like 20; calcium-binding domain. An EGF-like 21 domain is found at 1817–1853 (AASLCGLCNGHGDCIHDALSSNVTCACLDGYTGQFCE). N-linked (GlcNAc...) asparagine glycosylation is present at asparagine 1838. A helical membrane pass occupies residues 1861–1881 (LILMTLLALLFLLLTLLCCLY). At 1882 to 2104 (MCARCRCFGA…TTKAEEVNYF (223 aa)) the chain is on the cytoplasmic side. Residues 2031–2040 (SGAMMSSASG) show a composition bias toward low complexity. Residues 2031-2104 (SGAMMSSASG…TTKAEEVNYF (74 aa)) form a disordered region. Basic and acidic residues-rich tracts occupy residues 2062–2076 (VYDRTTRTNQSHDFE) and 2083–2104 (TGTERSKREFVTTTKAEEVNYF).

As to expression, abundant at hypodermal cell-matrix junctions overlying muscle of threefold embryos. Expression continues in body wall muscle in larvae and adults and is also detected in other regions where cells show mechanical attachment to the hypodermis including the inner surface of the pharynx, overlying anal and intestinal muscles, overlying vulval and uterine sex muscles, male tail muscle attachment zones and the six mechanosensory neurons (at protein level).

The protein resides in the cell junction. The protein localises to the hemidesmosome. It is found in the cytoplasm. Its subcellular location is the cytoskeleton. It localises to the cell membrane. Required for junctional attachments between hypodermis and muscle, and between the apical epithelial surface and the cuticular matrix. Essential for enclosure of the embryo by the hypodermis, hypodermal integrity, embryo elongation, and maintenance of hypodermal morphology in fully elongated embryos. The chain is Transmembrane matrix receptor MUP-4 from Caenorhabditis elegans.